Consider the following 1005-residue polypeptide: DNA-directed RNA polymerase subunit beta (1005 aa).

It belongs to the RNA polymerase beta chain family. In plastids the minimal PEP RNA polymerase catalytic core is composed of four subunits: alpha, beta, beta', and beta''. When a (nuclear-encoded) sigma factor is associated with the core the holoenzyme is formed, which can initiate transcription (Potential).

The protein localises to the plastid. Its subcellular location is the apicoplast. It catalyses the reaction RNA(n) + a ribonucleoside 5'-triphosphate = RNA(n+1) + diphosphate. In terms of biological role, DNA-dependent RNA polymerase catalyzes the transcription of DNA into RNA using the four ribonucleoside triphosphates as substrates. In Theileria parva (East coast fever infection agent), this protein is DNA-directed RNA polymerase subunit beta (rpoB).